The primary structure comprises 217 residues: ATP phosphoribosyltransferase (217 aa).

The protein belongs to the ATP phosphoribosyltransferase family. Short subfamily. Heteromultimer composed of HisG and HisZ subunits.

It is found in the cytoplasm. It catalyses the reaction 1-(5-phospho-beta-D-ribosyl)-ATP + diphosphate = 5-phospho-alpha-D-ribose 1-diphosphate + ATP. Its pathway is amino-acid biosynthesis; L-histidine biosynthesis; L-histidine from 5-phospho-alpha-D-ribose 1-diphosphate: step 1/9. Functionally, catalyzes the condensation of ATP and 5-phosphoribose 1-diphosphate to form N'-(5'-phosphoribosyl)-ATP (PR-ATP). Has a crucial role in the pathway because the rate of histidine biosynthesis seems to be controlled primarily by regulation of HisG enzymatic activity. In Burkholderia orbicola (strain AU 1054), this protein is ATP phosphoribosyltransferase.